A 72-amino-acid chain; its full sequence is Large ribosomal subunit protein uL30 (72 aa).

Belongs to the universal ribosomal protein uL30 family. As to quaternary structure, part of the 50S ribosomal subunit.

The sequence is that of Large ribosomal subunit protein uL30 from Mycobacterium ulcerans (strain Agy99).